The sequence spans 241 residues: Small ribosomal subunit protein uS2 (241 aa).

Belongs to the universal ribosomal protein uS2 family.

The protein is Small ribosomal subunit protein uS2 of Hamiltonella defensa subsp. Acyrthosiphon pisum (strain 5AT).